Reading from the N-terminus, the 177-residue chain is Protein-export protein SecB (177 aa).

Residues 1-22 are disordered; sequence MSDENNSGAAAPEAQNPGQNAA. A compositionally biased stretch (low complexity) spans 8–22; it reads GAAAPEAQNPGQNAA.

The protein belongs to the SecB family. As to quaternary structure, homotetramer, a dimer of dimers. One homotetramer interacts with 1 SecA dimer.

The protein resides in the cytoplasm. In terms of biological role, one of the proteins required for the normal export of preproteins out of the cell cytoplasm. It is a molecular chaperone that binds to a subset of precursor proteins, maintaining them in a translocation-competent state. It also specifically binds to its receptor SecA. This Paracoccus denitrificans (strain Pd 1222) protein is Protein-export protein SecB.